The primary structure comprises 123 residues: WAP four-disulfide core domain protein 5 (123 aa).

A signal peptide spans 1–24 (MRIQSLLLLGALLAVGSQLPAVFG). WAP domains follow at residues 27–73 (KGEK…CIPR) and 74–121 (VSVK…RDPA). 8 disulfides stabilise this stretch: cysteine 34–cysteine 62, cysteine 41–cysteine 66, cysteine 49–cysteine 61, cysteine 55–cysteine 70, cysteine 81–cysteine 109, cysteine 88–cysteine 113, cysteine 96–cysteine 108, and cysteine 102–cysteine 117.

It is found in the secreted. Functionally, putative acid-stable proteinase inhibitor. In Macaca mulatta (Rhesus macaque), this protein is WAP four-disulfide core domain protein 5 (WFDC5).